The following is a 630-amino-acid chain: Probable potassium transport system protein Kup (630 aa).

12 helical membrane-spanning segments follow: residues 17–37 (LAIA…LYSL), 51–71 (PSAI…VVGI), 105–125 (ITGL…GDAV), 144–164 (PQLS…LFWI), 175–195 (LFGP…IYHI), 218–238 (VLLA…AEAL), 255–275 (YVLV…LLLL), 283–303 (PFFL…STVA), 344–364 (IYVP…VIGF), 374–394 (YGIA…VVMV), 402–422 (LLVA…FGAN), and 428–448 (QGGW…MTWY).

This sequence belongs to the HAK/KUP transporter (TC 2.A.72) family.

Its subcellular location is the cell inner membrane. It catalyses the reaction K(+)(in) + H(+)(in) = K(+)(out) + H(+)(out). In terms of biological role, transport of potassium into the cell. Likely operates as a K(+):H(+) symporter. The protein is Probable potassium transport system protein Kup of Burkholderia mallei (strain NCTC 10247).